We begin with the raw amino-acid sequence, 213 residues long: Small ribosomal subunit protein uS4 (213 aa).

Positions 97–165 constitute an S4 RNA-binding domain; it reads RRLDNVVYRM…AKEQLRIKNA (69 aa).

The protein belongs to the universal ribosomal protein uS4 family. As to quaternary structure, part of the 30S ribosomal subunit. Contacts protein S5. The interaction surface between S4 and S5 is involved in control of translational fidelity.

Functionally, one of the primary rRNA binding proteins, it binds directly to 16S rRNA where it nucleates assembly of the body of the 30S subunit. Its function is as follows. With S5 and S12 plays an important role in translational accuracy. The sequence is that of Small ribosomal subunit protein uS4 from Psychrobacter sp. (strain PRwf-1).